Consider the following 405-residue polypeptide: MRIYLRTFGLCIVVALLSLVFLFSKHDEGSFSAGFKQVRAPLQQKSFNGAKAKQRPTATTSHRDVVQNPNSPVQEEVLMHLAAVACGERHGEVVNMLKTAVTLSQRALRFHIFAEQQLQTSIKADLDSWPAFIQGKFSYVLHPISFPHEHHEEWSQLFKPCASQRLFLPMILRELDSLLYVDTDVLFLQPVELIWDMLMLFNSTQLIAMAPEHEEPRIAWYSRFSWHPYYGKMGINSGVMLMNLTRMRITQFKNDMTPVGLHWDELLMPLLQKYKLNITWGDQDLINIIFHYNPEMVYTLPCHWNYRPDHCIYGSNCAPAEDEGVFVLHGNRGVFHSDKQPAFRAVYEAFEQYTFGEDLRQSLLSRLEVALNETTHTYCGKASHFFTTGLQKSVRRLQRATPPGD.

At 1–2 (MR) the chain is on the cytoplasmic side. A helical; Signal-anchor for type II membrane protein transmembrane segment spans residues 3-23 (IYLRTFGLCIVVALLSLVFLF). The Lumenal segment spans residues 24-405 (SKHDEGSFSA…RLQRATPPGD (382 aa)). A disordered region spans residues 46-65 (SFNGAKAKQRPTATTSHRDV). N-linked (GlcNAc...) asparagine glycosylation is found at N202, N243, N277, and N372.

It belongs to the glycosyltransferase 8 family.

The protein localises to the membrane. The enzyme catalyses 3-O-(beta-D-glucosyl)-L-seryl-[EGF-like domain protein] + UDP-alpha-D-xylose = 3-O-[alpha-D-xylosyl-(1-&gt;3)-beta-D-glucosyl]-L-seryl-[EGF-like domain protein] + UDP + H(+). In terms of biological role, glycosyltransferase which elongates the O-linked glucose attached to EGF-like repeats in the extracellular domain of Notch proteins by catalyzing the addition of xylose. This Danio rerio (Zebrafish) protein is Glucoside xylosyltransferase 1 (gxylt1).